Here is a 179-residue protein sequence, read N- to C-terminus: Inner membrane-spanning protein YciB (179 aa).

Helical transmembrane passes span Ile22 to Val42, Met50 to Asn70, Trp76 to Met96, Leu121 to Leu141, and Phe149 to Ile169.

This sequence belongs to the YciB family.

Its subcellular location is the cell inner membrane. Its function is as follows. Plays a role in cell envelope biogenesis, maintenance of cell envelope integrity and membrane homeostasis. The protein is Inner membrane-spanning protein YciB of Shigella dysenteriae serotype 1 (strain Sd197).